Reading from the N-terminus, the 175-residue chain is Peptide deformylase (175 aa).

Positions 96 and 138 each coordinate Fe cation. E139 is an active-site residue. H142 lines the Fe cation pocket.

The protein belongs to the polypeptide deformylase family. It depends on Fe(2+) as a cofactor.

The catalysed reaction is N-terminal N-formyl-L-methionyl-[peptide] + H2O = N-terminal L-methionyl-[peptide] + formate. In terms of biological role, removes the formyl group from the N-terminal Met of newly synthesized proteins. Requires at least a dipeptide for an efficient rate of reaction. N-terminal L-methionine is a prerequisite for activity but the enzyme has broad specificity at other positions. The protein is Peptide deformylase of Rhodopseudomonas palustris (strain ATCC BAA-98 / CGA009).